A 324-amino-acid polypeptide reads, in one-letter code: Aspartate carbamoyltransferase catalytic subunit (324 aa).

Residues R65 and T66 each contribute to the carbamoyl phosphate site. L-aspartate is bound at residue K93. 3 residues coordinate carbamoyl phosphate: R115, H145, and Q148. L-aspartate contacts are provided by R178 and R233. 2 residues coordinate carbamoyl phosphate: G274 and P275.

This sequence belongs to the aspartate/ornithine carbamoyltransferase superfamily. ATCase family. Heterododecamer (2C3:3R2) of six catalytic PyrB chains organized as two trimers (C3), and six regulatory PyrI chains organized as three dimers (R2).

The enzyme catalyses carbamoyl phosphate + L-aspartate = N-carbamoyl-L-aspartate + phosphate + H(+). The protein operates within pyrimidine metabolism; UMP biosynthesis via de novo pathway; (S)-dihydroorotate from bicarbonate: step 2/3. Functionally, catalyzes the condensation of carbamoyl phosphate and aspartate to form carbamoyl aspartate and inorganic phosphate, the committed step in the de novo pyrimidine nucleotide biosynthesis pathway. The sequence is that of Aspartate carbamoyltransferase catalytic subunit from Nitrosococcus oceani (strain ATCC 19707 / BCRC 17464 / JCM 30415 / NCIMB 11848 / C-107).